The following is a 290-amino-acid chain: Pyridoxal kinase PdxY (290 aa).

Substrate is bound by residues S12 and 47-48 (TQ). ATP is bound by residues D114, E151, K184, and 211–214 (RPLL). Residue D225 coordinates substrate.

The protein belongs to the pyridoxine kinase family. PdxY subfamily. In terms of assembly, homodimer. The cofactor is Mg(2+).

It catalyses the reaction pyridoxal + ATP = pyridoxal 5'-phosphate + ADP + H(+). It participates in cofactor metabolism; pyridoxal 5'-phosphate salvage; pyridoxal 5'-phosphate from pyridoxal: step 1/1. In terms of biological role, pyridoxal kinase involved in the salvage pathway of pyridoxal 5'-phosphate (PLP). Catalyzes the phosphorylation of pyridoxal to PLP. The sequence is that of Pyridoxal kinase PdxY from Pseudomonas putida (strain ATCC 700007 / DSM 6899 / JCM 31910 / BCRC 17059 / LMG 24140 / F1).